The primary structure comprises 388 residues: G2/mitotic-specific cyclin-B2 (388 aa).

The tract at residues 46-67 is disordered; that stretch reads ATNGKVGPSKKPSKASCVQKPK.

This sequence belongs to the cyclin family. Cyclin AB subfamily. As to quaternary structure, interacts with the CDK1 protein kinase to form a serine/threonine kinase holoenzyme complex also known as maturation promoting factor (MPF). The cyclin subunit imparts substrate specificity to the complex.

Functionally, essential for the control of the cell cycle at the G2/M (mitosis) transition. This chain is G2/mitotic-specific cyclin-B2 (ccnb2), found in Oryzias curvinotus (Hynann ricefish).